Consider the following 331-residue polypeptide: Ketol-acid reductoisomerase (NADP(+)) (331 aa).

A KARI N-terminal Rossmann domain is found at 2-182; that stretch reads AKVYYDEDAN…GGTKGGVLET (181 aa). Residues 25–28, Ser-51, Ser-53, and 83–86 contribute to the NADP(+) site; these read YGSQ and DEKQ. His-108 is an active-site residue. Gly-134 is a binding site for NADP(+). The KARI C-terminal knotted domain maps to 183–328; the sequence is TFKDETETDL…VELRAMMPWL (146 aa). Mg(2+)-binding residues include Asp-191, Glu-195, Glu-227, and Glu-231. A substrate-binding site is contributed by Ser-252.

The protein belongs to the ketol-acid reductoisomerase family. The cofactor is Mg(2+).

It carries out the reaction (2R)-2,3-dihydroxy-3-methylbutanoate + NADP(+) = (2S)-2-acetolactate + NADPH + H(+). The catalysed reaction is (2R,3R)-2,3-dihydroxy-3-methylpentanoate + NADP(+) = (S)-2-ethyl-2-hydroxy-3-oxobutanoate + NADPH + H(+). It functions in the pathway amino-acid biosynthesis; L-isoleucine biosynthesis; L-isoleucine from 2-oxobutanoate: step 2/4. Its pathway is amino-acid biosynthesis; L-valine biosynthesis; L-valine from pyruvate: step 2/4. In terms of biological role, involved in the biosynthesis of branched-chain amino acids (BCAA). Catalyzes an alkyl-migration followed by a ketol-acid reduction of (S)-2-acetolactate (S2AL) to yield (R)-2,3-dihydroxy-isovalerate. In the isomerase reaction, S2AL is rearranged via a Mg-dependent methyl migration to produce 3-hydroxy-3-methyl-2-ketobutyrate (HMKB). In the reductase reaction, this 2-ketoacid undergoes a metal-dependent reduction by NADPH to yield (R)-2,3-dihydroxy-isovalerate. In Clostridium novyi (strain NT), this protein is Ketol-acid reductoisomerase (NADP(+)).